We begin with the raw amino-acid sequence, 855 residues long: DNA mismatch repair protein MutS (855 aa).

616–623 contacts ATP; sequence GPNMGGKS.

It belongs to the DNA mismatch repair MutS family.

In terms of biological role, this protein is involved in the repair of mismatches in DNA. It is possible that it carries out the mismatch recognition step. This protein has a weak ATPase activity. The polypeptide is DNA mismatch repair protein MutS (Salmonella gallinarum (strain 287/91 / NCTC 13346)).